The primary structure comprises 213 residues: Protein HSH49 (213 aa).

RRM domains follow at residues 9–88 and 108–185; these read NTVY…QVTN and AKLF…YAFK.

Interacts with RDS3.

It is found in the nucleus. Possible SF3b-like factor. The protein is Protein HSH49 (HSH49) of Saccharomyces cerevisiae (strain ATCC 204508 / S288c) (Baker's yeast).